The primary structure comprises 307 residues: GTPase Era (307 aa).

Residues 17 to 186 (RCGFVAIVGR…LELLKPYLPE (170 aa)) enclose the Era-type G domain. Residues 25–32 (GRPNVGKS) are G1. Position 25-32 (25-32 (GRPNVGKS)) interacts with GTP. A G2 region spans residues 51 to 55 (QTTRN). A G3 region spans residues 72–75 (DTPG). Residues 72 to 76 (DTPGF) and 133 to 136 (NKID) contribute to the GTP site. The tract at residues 133–136 (NKID) is G4. A G5 region spans residues 165 to 167 (VSA). The 77-residue stretch at 217 to 293 (LGEELPYAMN…FLKVWVKVKS (77 aa)) folds into the KH type-2 domain.

The protein belongs to the TRAFAC class TrmE-Era-EngA-EngB-Septin-like GTPase superfamily. Era GTPase family. As to quaternary structure, monomer.

It localises to the cytoplasm. The protein resides in the cell inner membrane. Functionally, an essential GTPase that binds both GDP and GTP, with rapid nucleotide exchange. Plays a role in 16S rRNA processing and 30S ribosomal subunit biogenesis and possibly also in cell cycle regulation and energy metabolism. The chain is GTPase Era from Neisseria meningitidis serogroup C / serotype 2a (strain ATCC 700532 / DSM 15464 / FAM18).